Consider the following 882-residue polypeptide: MNAPAKFSTSQIRSDFLAFFEGKGHTIVPSAPLVPGNDPTLLFTNSGMVQFKDVFLGAEKRSYVRAADVQRCLRAGGKHNDLDSVGYTARHHTFFEMLGNWSFGDYFKKDAIAWAWELLTQVWKLPADRLLVTVYHTDEEAFELWRDMIGIPESRIVRIGDNKGAPYASDNFWQMADTGPCGPCTEIFFDHGDHIAGGPPGSPDEDGDRFIEIWNLVFMQFDRQPDGTLVALPAPCVDTGMGLERLAAILQHVHTNYEIDVFQALIGKASALTGIADLENKSLRVIADHIRACSFLIVDGVLPSNEGRGYVLRRIIRRALRHGWMLGVRQLFFSKMVPTLVELMGEAYPELVVAQETVARALLAEEERFAETLDAGMKIFDDVASRSQEIIPGADAFRLYDTYGFPVDLTADIARERGMRVDMEGFEFAMERQRETARAAGKFGGGVALPADLVATMAPTVFLGYEAQDADALKVVALLKQGRPVDRAEAGDEVIVFTDRTPFYAESGGQVGDSGQLSGTDVSIEVADTQKFAGQFHGHVGRIAEGALKLGDVLSGGIDVQRRGKTILNHSATHLLHAALREVLGTHVQQKGSLVAPDRLRFDFSHFQPITAEELAVIERKVNAEVRTNHSVEVHNMAMQEALDFGAMALFGEKYGERVRVLKMGGYSTELCGGTHVSRTGDIGLFKITSEGGVSSGVRRIEAVTGQGALDYVAEEERRLGEAANLLGGNSTEIVDKVRALTDRQKRLERELESLKAKLASGATADLGASAVDVAGVKVIAVRLEGFDAKALREAMDRLKQQLGDSVIVLAGAAGGKVALVAGVNGSPTGKVKAGELLGHIASQIGGKGGGRPDLAQGGGEDGPALATALQGVPSWVKQHLG.

Positions 570, 574, 672, and 676 each coordinate Zn(2+).

It belongs to the class-II aminoacyl-tRNA synthetase family. Zn(2+) is required as a cofactor.

It is found in the cytoplasm. It catalyses the reaction tRNA(Ala) + L-alanine + ATP = L-alanyl-tRNA(Ala) + AMP + diphosphate. Catalyzes the attachment of alanine to tRNA(Ala) in a two-step reaction: alanine is first activated by ATP to form Ala-AMP and then transferred to the acceptor end of tRNA(Ala). Also edits incorrectly charged Ser-tRNA(Ala) and Gly-tRNA(Ala) via its editing domain. The sequence is that of Alanine--tRNA ligase from Xanthomonas campestris pv. campestris (strain ATCC 33913 / DSM 3586 / NCPPB 528 / LMG 568 / P 25).